Reading from the N-terminus, the 520-residue chain is D-aminopeptidase (520 aa).

S62 serves as the catalytic Nucleophile. K65 acts as the Proton donor/acceptor in catalysis. The interval 477–487 (QRSMDAPSPGE) is important for specificity. Residue D481 coordinates substrate.

This sequence belongs to the peptidase S12 family. As to quaternary structure, homodimer.

The enzyme catalyses Release of an N-terminal D-amino acid from a peptide, Xaa-|-Yaa-, in which Xaa is preferably D-Ala, D-Ser or D-Thr. D-amino acid amides and methyl esters also are hydrolyzed, as is glycine amide.. With respect to regulation, inhibited by beta-lactam compounds such as 6-aminopenicillic acid, 7-aminocephalosporanic acid, benzylpenicillin and ampicillin. Inhibited by p-chloromercuribenzoate. Hydrolyzes N-terminal residues in D-amino acid-containing peptides. This Brucella anthropi (Ochrobactrum anthropi) protein is D-aminopeptidase (dap).